The chain runs to 122 residues: Large-conductance mechanosensitive channel (122 aa).

A run of 2 helical transmembrane segments spans residues 14 to 34 and 67 to 87; these read VLDL…VKSL and GAFL…FILI.

The protein belongs to the MscL family. In terms of assembly, homopentamer.

The protein localises to the cell membrane. Functionally, channel that opens in response to stretch forces in the membrane lipid bilayer. May participate in the regulation of osmotic pressure changes within the cell. This Lactococcus lactis subsp. lactis (strain IL1403) (Streptococcus lactis) protein is Large-conductance mechanosensitive channel.